The sequence spans 228 residues: Protein Iojap, chloroplastic (228 aa).

The tract at residues 1–54 (MGGTSAAVPSHGLACAPPAAVTLNPRARRRRASSGSGGHRSSPQQPLRSDLLPP) is disordered. A chloroplast-targeting transit peptide spans 1 to 62 (MGGTSAAVPS…PPATVACRAR (62 aa)).

The protein belongs to the Iojap/RsfS family. As to quaternary structure, interacts with chloroplast ribosomal protein uL14c (rpl14).

The protein localises to the plastid. Its subcellular location is the chloroplast. Its function is as follows. May be a ribosome silencing factor (Potential). Involved in plastid biogenesis. Plastids affected by a mutation in Iojap lose the ability to perform translation and lack plastid ribosomes. This Zea mays (Maize) protein is Protein Iojap, chloroplastic (Ij).